The primary structure comprises 278 residues: Large ribosomal subunit protein uL2c (278 aa).

A disordered region spans residues 224 to 256 (NPVDHPHGGGEGRAPIGRKKPTTPWGYPALGRK).

The protein belongs to the universal ribosomal protein uL2 family. In terms of assembly, part of the 50S ribosomal subunit.

Its subcellular location is the plastid. The polypeptide is Large ribosomal subunit protein uL2c (rpl2) (Cuscuta exaltata (Tall dodder)).